The primary structure comprises 363 residues: Probable mannitol dehydrogenase 3 (363 aa).

The Zn(2+) site is built by cysteine 51, histidine 73, cysteine 104, cysteine 107, cysteine 110, cysteine 118, and cysteine 168.

The protein belongs to the zinc-containing alcohol dehydrogenase family. Requires Zn(2+) as cofactor.

It carries out the reaction D-mannitol + NAD(+) = D-mannose + NADH + H(+). In terms of biological role, oxidizes mannitol to mannose. Provides the initial step by which translocated mannitol is committed to central metabolism and, by regulating mannitol pool size, is important in regulating salt tolerance at the cellular level. In Stylosanthes humilis (Townsville stylo), this protein is Probable mannitol dehydrogenase 3 (CAD3).